The chain runs to 1266 residues: Formin-like protein 13 (1266 aa).

In terms of domain architecture, Phosphatase tensin-type spans Tyr9–Ser193. The active-site Phosphocysteine intermediate is Cys126. The C2 tensin-type domain maps to Asp199 to Met337. Disordered regions lie at residues Lys497 to Ser568, Lys597 to Arg825, Ser881 to Glu902, and Gln1210 to Pro1266. Residues Pro529 to Val538 show a composition bias toward pro residues. Positions Glu617–Val644 are enriched in polar residues. Pro residues-rich tracts occupy residues Leu686–Met698, Val706–Pro742, Pro754–Leu781, and Pro806–Pro815. Residues Val829–Lys1226 enclose the FH2 domain. Basic and acidic residues-rich tracts occupy residues Gly889 to Glu902, Gln1210 to Lys1248, and Glu1255 to Pro1266.

The protein belongs to the formin-like family. Class-II subfamily.

This Arabidopsis thaliana (Mouse-ear cress) protein is Formin-like protein 13 (FH13).